A 228-amino-acid polypeptide reads, in one-letter code: L-ribulose-5-phosphate 4-epimerase UlaF (228 aa).

Substrate is bound by residues G26 to N27, S43 to G44, and S72 to S73. Zn(2+)-binding residues include D74, H93, and H95. The active-site Proton donor/acceptor is the D118. H167 serves as a coordination point for Zn(2+). The active-site Proton donor/acceptor is the Y225.

This sequence belongs to the aldolase class II family. AraD/FucA subfamily. Zn(2+) serves as cofactor.

The enzyme catalyses L-ribulose 5-phosphate = D-xylulose 5-phosphate. Its pathway is cofactor degradation; L-ascorbate degradation; D-xylulose 5-phosphate from L-ascorbate: step 4/4. Catalyzes the isomerization of L-ribulose 5-phosphate to D-xylulose 5-phosphate. Is involved in the anaerobic L-ascorbate utilization. The polypeptide is L-ribulose-5-phosphate 4-epimerase UlaF (Escherichia coli (strain SMS-3-5 / SECEC)).